The primary structure comprises 473 residues: Glutamate--tRNA ligase 1 (473 aa).

Residues Pro-23–Gly-33 carry the 'HIGH' region motif. Residues Lys-252–Arg-256 carry the 'KMSKS' region motif. ATP is bound at residue Lys-255.

This sequence belongs to the class-I aminoacyl-tRNA synthetase family. Glutamate--tRNA ligase type 1 subfamily. In terms of assembly, monomer.

It is found in the cytoplasm. The enzyme catalyses tRNA(Glu) + L-glutamate + ATP = L-glutamyl-tRNA(Glu) + AMP + diphosphate. Functionally, catalyzes the attachment of glutamate to tRNA(Glu) in a two-step reaction: glutamate is first activated by ATP to form Glu-AMP and then transferred to the acceptor end of tRNA(Glu). This chain is Glutamate--tRNA ligase 1, found in Granulibacter bethesdensis (strain ATCC BAA-1260 / CGDNIH1).